The primary structure comprises 101 residues: Small ribosomal subunit protein eS24 (101 aa).

This sequence belongs to the eukaryotic ribosomal protein eS24 family.

This Methanocaldococcus jannaschii (strain ATCC 43067 / DSM 2661 / JAL-1 / JCM 10045 / NBRC 100440) (Methanococcus jannaschii) protein is Small ribosomal subunit protein eS24.